The primary structure comprises 343 residues: MDYREAGVDIQAGRSFVEKIRQGVESTYRREVLGGLGGFGGYFELPQGYQHPVLVSGTDGVGTKLKIAQALNQHHTIGIDLVAMCVNDVLTCGAEPLFFLDYLATGKLNPQQLSDVVQGIVEGCRLSGCALLGGETAEMPGFYPVGEYDVAGFCVGIVEKSKILDGSQVNIGDIAIGLASSGVHSNGFSLVRKIVEVNGLNWSDRPQLLNGQTLGEVLLTPTQLYVKPILNALNSGLDIHAMAHITGGGLPENLPRCLDKGQSVEIIDKSWNILPIFQWIAQQGQISPASMYETFNMGIGFVVIVPPEKAQLAVNFLENQGILAYEIGKVIEGKGEVVIESND.

This sequence belongs to the AIR synthase family.

It is found in the cytoplasm. It catalyses the reaction 2-formamido-N(1)-(5-O-phospho-beta-D-ribosyl)acetamidine + ATP = 5-amino-1-(5-phospho-beta-D-ribosyl)imidazole + ADP + phosphate + H(+). It participates in purine metabolism; IMP biosynthesis via de novo pathway; 5-amino-1-(5-phospho-D-ribosyl)imidazole from N(2)-formyl-N(1)-(5-phospho-D-ribosyl)glycinamide: step 2/2. The chain is Phosphoribosylformylglycinamidine cyclo-ligase from Rippkaea orientalis (strain PCC 8801 / RF-1) (Cyanothece sp. (strain PCC 8801)).